The primary structure comprises 430 residues: Glutamate-1-semialdehyde 2,1-aminomutase (430 aa).

Lysine 265 carries the post-translational modification N6-(pyridoxal phosphate)lysine.

It belongs to the class-III pyridoxal-phosphate-dependent aminotransferase family. HemL subfamily. As to quaternary structure, homodimer. The cofactor is pyridoxal 5'-phosphate.

It is found in the cytoplasm. The catalysed reaction is (S)-4-amino-5-oxopentanoate = 5-aminolevulinate. Its pathway is porphyrin-containing compound metabolism; protoporphyrin-IX biosynthesis; 5-aminolevulinate from L-glutamyl-tRNA(Glu): step 2/2. The protein is Glutamate-1-semialdehyde 2,1-aminomutase of Shewanella baltica (strain OS195).